Consider the following 87-residue polypeptide: Probable Fe(2+)-trafficking protein (87 aa).

The protein belongs to the Fe(2+)-trafficking protein family.

In terms of biological role, could be a mediator in iron transactions between iron acquisition and iron-requiring processes, such as synthesis and/or repair of Fe-S clusters in biosynthetic enzymes. This is Probable Fe(2+)-trafficking protein from Francisella tularensis subsp. mediasiatica (strain FSC147).